Consider the following 81-residue polypeptide: Large ribosomal subunit protein uL23 (81 aa).

It belongs to the universal ribosomal protein uL23 family. Part of the 50S ribosomal subunit. Contacts protein L29.

Functionally, binds to 23S rRNA. One of the proteins that surrounds the polypeptide exit tunnel on the outside of the ribosome. The chain is Large ribosomal subunit protein uL23 from Saccharolobus solfataricus (strain ATCC 35092 / DSM 1617 / JCM 11322 / P2) (Sulfolobus solfataricus).